We begin with the raw amino-acid sequence, 185 residues long: Ribosome-recycling factor (185 aa).

It belongs to the RRF family.

It is found in the cytoplasm. Functionally, responsible for the release of ribosomes from messenger RNA at the termination of protein biosynthesis. May increase the efficiency of translation by recycling ribosomes from one round of translation to another. The protein is Ribosome-recycling factor of Acidothermus cellulolyticus (strain ATCC 43068 / DSM 8971 / 11B).